The chain runs to 393 residues: Putative N(4)-(beta-N-acetylglucosaminyl)-L-asparaginase GH22932 (393 aa).

Residues 15-41 (ALKPITNSSSDTITPNPNLITTSRGSS) form a disordered region. A compositionally biased stretch (polar residues) spans 19–41 (ITNSSSDTITPNPNLITTSRGSS). 2 cysteine pairs are disulfide-bonded: C100–C105 and C199–C215. The active-site Nucleophile is the T246. Substrate contacts are provided by residues 274–277 (RVGD) and 297–300 (TGDG). C357 and C381 form a disulfide bridge.

This sequence belongs to the Ntn-hydrolase family. As to quaternary structure, heterotetramer of two alpha and two beta chains arranged as a dimer of alpha/beta heterodimers. In terms of processing, cleaved into an alpha and beta chain by autocatalysis; this activates the enzyme. The N-terminal residue of the beta subunit is responsible for the nucleophile hydrolase activity.

It catalyses the reaction N(4)-(beta-N-acetyl-D-glucosaminyl)-L-asparagine + H2O = N-acetyl-beta-D-glucosaminylamine + L-aspartate + H(+). Functionally, cleaves the GlcNAc-Asn bond which joins oligosaccharides to the peptide of asparagine-linked glycoproteins. This chain is Putative N(4)-(beta-N-acetylglucosaminyl)-L-asparaginase GH22932, found in Drosophila grimshawi (Hawaiian fruit fly).